Here is a 252-residue protein sequence, read N- to C-terminus: Small ribosomal subunit protein uS2 (252 aa).

Belongs to the universal ribosomal protein uS2 family.

The chain is Small ribosomal subunit protein uS2 from Ruminiclostridium cellulolyticum (strain ATCC 35319 / DSM 5812 / JCM 6584 / H10) (Clostridium cellulolyticum).